The chain runs to 308 residues: Homoserine kinase (308 aa).

95–105 (PQSRGLGSSAA) provides a ligand contact to ATP.

It belongs to the GHMP kinase family. Homoserine kinase subfamily.

It is found in the cytoplasm. It catalyses the reaction L-homoserine + ATP = O-phospho-L-homoserine + ADP + H(+). It participates in amino-acid biosynthesis; L-threonine biosynthesis; L-threonine from L-aspartate: step 4/5. Functionally, catalyzes the ATP-dependent phosphorylation of L-homoserine to L-homoserine phosphate. The polypeptide is Homoserine kinase (Corynebacterium jeikeium (strain K411)).